Here is a 379-residue protein sequence, read N- to C-terminus: Anhydro-N-acetylmuramic acid kinase (379 aa).

Residue 9–16 coordinates ATP; the sequence is GTSADGVD.

The protein belongs to the anhydro-N-acetylmuramic acid kinase family.

It carries out the reaction 1,6-anhydro-N-acetyl-beta-muramate + ATP + H2O = N-acetyl-D-muramate 6-phosphate + ADP + H(+). It participates in amino-sugar metabolism; 1,6-anhydro-N-acetylmuramate degradation. Its pathway is cell wall biogenesis; peptidoglycan recycling. Its function is as follows. Catalyzes the specific phosphorylation of 1,6-anhydro-N-acetylmuramic acid (anhMurNAc) with the simultaneous cleavage of the 1,6-anhydro ring, generating MurNAc-6-P. Is required for the utilization of anhMurNAc either imported from the medium or derived from its own cell wall murein, and thus plays a role in cell wall recycling. The protein is Anhydro-N-acetylmuramic acid kinase of Synechococcus sp. (strain CC9605).